The primary structure comprises 271 residues: Small ribosomal subunit protein uS2 (271 aa).

Basic and acidic residues predominate over residues 229–242; that stretch reads KERKGKDAEEELKK. The interval 229 to 271 is disordered; that stretch reads KERKGKDAEEELKKAAAPKAAPAAEAAPAAEAPAAPVVEAAAE. Positions 243-271 are enriched in low complexity; the sequence is AAAPKAAPAAEAAPAAEAPAAPVVEAAAE.

It belongs to the universal ribosomal protein uS2 family.

This chain is Small ribosomal subunit protein uS2, found in Nitratidesulfovibrio vulgaris (strain DSM 19637 / Miyazaki F) (Desulfovibrio vulgaris).